Here is a 272-residue protein sequence, read N- to C-terminus: HMP-PP phosphatase (272 aa).

The active-site Nucleophile is Asp8. The Mg(2+) site is built by Asp8, Asp10, and Asp212.

This sequence belongs to the HAD-like hydrolase superfamily. Cof family. Requires Mg(2+) as cofactor.

It catalyses the reaction 4-amino-2-methyl-5-(diphosphooxymethyl)pyrimidine + H2O = 4-amino-2-methyl-5-(phosphooxymethyl)pyrimidine + phosphate + H(+). In terms of biological role, catalyzes the hydrolysis of 4-amino-2-methyl-5-hydroxymethylpyrimidine pyrophosphate (HMP-PP) to 4-amino-2-methyl-5-hydroxymethylpyrimidine phosphate (HMP-P). This Salmonella arizonae (strain ATCC BAA-731 / CDC346-86 / RSK2980) protein is HMP-PP phosphatase.